The sequence spans 256 residues: Imidazole glycerol phosphate synthase subunit HisF (256 aa).

Catalysis depends on residues aspartate 12 and aspartate 131.

The protein belongs to the HisA/HisF family. As to quaternary structure, heterodimer of HisH and HisF.

It is found in the cytoplasm. The enzyme catalyses 5-[(5-phospho-1-deoxy-D-ribulos-1-ylimino)methylamino]-1-(5-phospho-beta-D-ribosyl)imidazole-4-carboxamide + L-glutamine = D-erythro-1-(imidazol-4-yl)glycerol 3-phosphate + 5-amino-1-(5-phospho-beta-D-ribosyl)imidazole-4-carboxamide + L-glutamate + H(+). Its pathway is amino-acid biosynthesis; L-histidine biosynthesis; L-histidine from 5-phospho-alpha-D-ribose 1-diphosphate: step 5/9. Its function is as follows. IGPS catalyzes the conversion of PRFAR and glutamine to IGP, AICAR and glutamate. The HisF subunit catalyzes the cyclization activity that produces IGP and AICAR from PRFAR using the ammonia provided by the HisH subunit. The sequence is that of Imidazole glycerol phosphate synthase subunit HisF from Ectopseudomonas mendocina (strain ymp) (Pseudomonas mendocina).